A 238-amino-acid chain; its full sequence is ATP-dependent dethiobiotin synthetase BioD (238 aa).

Residue Glu-12–Val-17 participates in ATP binding. Thr-16 contributes to the Mg(2+) binding site. Lys-37 is an active-site residue. Thr-41 is a binding site for substrate. ATP contacts are provided by residues Asp-50, Glu-109–Gly-112, Gly-170–Ser-171, and Pro-200–Gly-202. The Mg(2+) site is built by Asp-50 and Glu-109.

The protein belongs to the dethiobiotin synthetase family. As to quaternary structure, homodimer. The cofactor is Mg(2+).

It localises to the cytoplasm. It carries out the reaction (7R,8S)-7,8-diammoniononanoate + CO2 + ATP = (4R,5S)-dethiobiotin + ADP + phosphate + 3 H(+). Its pathway is cofactor biosynthesis; biotin biosynthesis; biotin from 7,8-diaminononanoate: step 1/2. Functionally, catalyzes a mechanistically unusual reaction, the ATP-dependent insertion of CO2 between the N7 and N8 nitrogen atoms of 7,8-diaminopelargonic acid (DAPA, also called 7,8-diammoniononanoate) to form a ureido ring. In Parafrankia sp. (strain EAN1pec), this protein is ATP-dependent dethiobiotin synthetase BioD.